We begin with the raw amino-acid sequence, 397 residues long: 4-O-methyl-glucuronoyl methylesterase (397 aa).

Residues 1 to 18 form the signal peptide; the sequence is MVHLTSALLVAGAAFAAA. Intrachain disulfides connect Cys-31–Cys-65, Cys-212–Cys-347, and Cys-244–Cys-319. Residues 211–216 carry the GXSYXG catalytic site motif motif; that stretch reads GCSRNG. Residue Ser-213 is the Nucleophile of the active site. Substrate is bound by residues Lys-217, Gln-259, Glu-267, and Trp-310. Residue His-346 is the Proton donor/acceptor of the active site.

The protein belongs to the carbohydrate esterase 15 (CE15) family.

It is found in the secreted. It catalyses the reaction a 4-O-methyl-alpha-D-glucuronosyl ester derivative + H2O = 4-O-methyl-alpha-D-glucuronate derivative + an alcohol + H(+). In terms of biological role, glucuronoyl esterase which may play a significant role in biomass degradation, as it is considered to disconnect hemicellulose from lignin through the hydrolysis of the ester bond between 4-O-methyl-D-glucuronic acid residues of glucuronoxylans and aromatic alcohols of lignin. This Thermothelomyces thermophilus (strain ATCC 42464 / BCRC 31852 / DSM 1799) (Sporotrichum thermophile) protein is 4-O-methyl-glucuronoyl methylesterase (ge2).